The primary structure comprises 318 residues: Taste receptor type 2 member 60 (318 aa).

The Extracellular segment spans residues 1–7 (MNGDHMV). A helical membrane pass occupies residues 8–28 (LGSSMTDEKAIILVIILLLLC). At 29-40 (LVAIAGNCFITA) the chain is on the cytoplasmic side. Residues 41–61 (ALGMEWVLQRMLLPCDKLLVS) form a helical membrane-spanning segment. Over 62-88 (LGASRFCPQWVVMGKTTYVFLYPTAFP) the chain is Extracellular. Residues 89 to 109 (YNPVLRFLAFQWDLLNAATLW) form a helical membrane-spanning segment. The Cytoplasmic portion of the chain corresponds to 110–128 (FSTWLSVFYCVKIATFTHP). A helical membrane pass occupies residues 129 to 149 (VFLWLKHKLSEWVPWMLFSSV). Topologically, residues 150-183 (GLSSFTTILFFIGNHRVYQSYLRNHLQPWNVTGN) are extracellular. Asn-179 is a glycosylation site (N-linked (GlcNAc...) asparagine). Residues 184–204 (SIWSYCEKFYLFPLKMITWTM) traverse the membrane as a helical segment. Over 205–234 (PTAVFFICMILLITSLGRHMKKALLTNSGF) the chain is Cytoplasmic. The chain crosses the membrane as a helical span at residues 235–255 (RDPSVQAHIKAMLALLSFAML). The Extracellular segment spans residues 256–264 (FISYFLSLV). A helical membrane pass occupies residues 265–285 (FSAAGIFPPLDFKFWVWESVI). Topologically, residues 286–318 (YLCAAVHPIILLFSNRRLRAVLKRCRSSRCGTP) are cytoplasmic.

The protein belongs to the G-protein coupled receptor T2R family.

Its subcellular location is the membrane. Its function is as follows. Receptor that may play a role in the perception of bitterness and is gustducin-linked. May play a role in sensing the chemical composition of the gastrointestinal content. The activity of this receptor may stimulate alpha gustducin, mediate PLC-beta-2 activation and lead to the gating of TRPM5. This Pongo pygmaeus (Bornean orangutan) protein is Taste receptor type 2 member 60 (TAS2R60).